Reading from the N-terminus, the 63-residue chain is Laccase-C1 (63 aa).

This sequence belongs to the multicopper oxidase family. As to quaternary structure, monomer. The cofactor is Cu cation. Post-translationally, glycosylated; contains 16% carbohydrates.

The protein localises to the secreted. It catalyses the reaction 4 hydroquinone + O2 = 4 benzosemiquinone + 2 H2O. With respect to regulation, inhibited by sodium azide. Functionally, lignin degradation and detoxification of lignin-derived products. Oxidation of a broad range of substrates including mono-, di- and polyphenols, aromatic amines and methoxy-substituted phenols accompanied by reduction of oxygen to water. The chain is Laccase-C1 from Cerrena unicolor (Canker rot fungus).